The chain runs to 159 residues: Small ribosomal subunit protein bS6 (159 aa).

2 non-standard amino acids (selenocysteine) are found at residues Sec46 and Sec52.

It belongs to the bacterial ribosomal protein bS6 family.

Functionally, binds together with bS18 to 16S ribosomal RNA. This chain is Small ribosomal subunit protein bS6, found in Desulfotalea psychrophila (strain LSv54 / DSM 12343).